The sequence spans 134 residues: D-ribose pyranase (134 aa).

Catalysis depends on His-20, which acts as the Proton donor. Substrate is bound by residues Asp-28, His-101, and 123–125 (YSN).

This sequence belongs to the RbsD / FucU family. RbsD subfamily. In terms of assembly, homodecamer.

Its subcellular location is the cytoplasm. It carries out the reaction beta-D-ribopyranose = beta-D-ribofuranose. The protein operates within carbohydrate metabolism; D-ribose degradation; D-ribose 5-phosphate from beta-D-ribopyranose: step 1/2. Catalyzes the interconversion of beta-pyran and beta-furan forms of D-ribose. The sequence is that of D-ribose pyranase from Pseudomonas syringae pv. tomato (strain ATCC BAA-871 / DC3000).